The sequence spans 319 residues: Ataxin-3 homolog (319 aa).

Positions 8–179 constitute a Josephin domain; it reads ISSIFFERQQ…NSEADDFITL (172 aa). Cys-21 acts as the Nucleophile in catalysis. The active-site Proton acceptor is the His-118. The active site involves Asn-133. 2 UIM domains span residues 218–237 and 242–261; these read QEDR…KESS and SDED…DPNI. The disordered stretch occupies residues 253-319; sequence MSLSQDPNIP…EKKSQNVPEE (67 aa). A compositionally biased stretch (polar residues) spans 254-267; it reads SLSQDPNIPSTSAA. Basic and acidic residues predominate over residues 295–313; it reads QQRRDRAKFLEKLEEEKKS. Residues 297-300 are interaction with cdc-48.1 and cdc-48.2; it reads RRDR.

Forms a complex composed of deubiquitinating enzyme atx-3, adapter ubxn-5 and cdc-48.1. Forms a complex composed of deubiquitinating enzyme atx-3, E4 ubiquitin-protein ligase ufd-2 and cdc-48.1. Interacts (via RRDR motif) with cdc-48.1 (via N-terminus) and cdc-48.2 (via N-terminus); the interaction with cdc-48.1 is not required for atx-3 enzymatic activity. Interacts (via C-terminus) with ubxn-5. May interact with ned-8.

The protein localises to the cytoplasm. It localises to the nucleus. It is found in the nucleolus. The enzyme catalyses Thiol-dependent hydrolysis of ester, thioester, amide, peptide and isopeptide bonds formed by the C-terminal Gly of ubiquitin (a 76-residue protein attached to proteins as an intracellular targeting signal).. In terms of biological role, acts as a chain editing deubiquitinating enzyme that binds and cleaves 'Lys-48'-linked polyubiquitin chains, with a preference for chains containing four or more ubiquitin molecules thereby modulating protein degradation by the ubiquitin-proteasome pathway. Probably by regulating the IGF-1-insulin-like pathway, regulates lifespan. Regulates germline DNA double-strand-break repair and apoptosis in response to DNA damage by recruiting E4 ubiquitin-protein ligase ufd-2 to DNA repair foci. Interacts with key regulators of transcription and represses transcription. Acts as a histone-binding protein that regulates transcription. This chain is Ataxin-3 homolog, found in Caenorhabditis briggsae.